The sequence spans 173 residues: RNA pyrophosphohydrolase (173 aa).

One can recognise a Nudix hydrolase domain in the interval glycine 6–lysine 149. The short motif at glycine 38–glycine 59 is the Nudix box element.

This sequence belongs to the Nudix hydrolase family. RppH subfamily. The cofactor is a divalent metal cation.

Accelerates the degradation of transcripts by removing pyrophosphate from the 5'-end of triphosphorylated RNA, leading to a more labile monophosphorylated state that can stimulate subsequent ribonuclease cleavage. The sequence is that of RNA pyrophosphohydrolase from Shewanella piezotolerans (strain WP3 / JCM 13877).